We begin with the raw amino-acid sequence, 504 residues long: Maturase K (504 aa).

It belongs to the intron maturase 2 family. MatK subfamily.

The protein localises to the plastid. Its subcellular location is the chloroplast. Usually encoded in the trnK tRNA gene intron. Probably assists in splicing its own and other chloroplast group II introns. The sequence is that of Maturase K from Turritis glabra (Tower mustard).